We begin with the raw amino-acid sequence, 145 residues long: Secreted RxLR effector protein 100 (145 aa).

An N-terminal signal peptide occupies residues 1–19 (MRYLLLTFFTFHCQMVADA). Positions 27-30 (RLLR) match the RxLR motif. Positions 38–77 (SGEGKIEEAGMIVTTGAPTPENETMEHNEVPQSTTDTDQK) are disordered. N-linked (GlcNAc...) asparagine glycosylation occurs at Asn-59.

This sequence belongs to the RxLR effector family.

It is found in the secreted. The protein localises to the host nucleus. Its function is as follows. Secreted effector that dos not suppress the host cell death induced by cell death-inducing proteins. This Plasmopara viticola (Downy mildew of grapevine) protein is Secreted RxLR effector protein 100.